We begin with the raw amino-acid sequence, 256 residues long: Phosphoribosylaminoimidazole-succinocarboxamide synthase (256 aa).

The disordered stretch occupies residues 234-256 (KPQKPAAAKKKAPVSKKTVKRTR). Basic residues predominate over residues 240–256 (AAKKKAPVSKKTVKRTR).

It belongs to the SAICAR synthetase family.

It carries out the reaction 5-amino-1-(5-phospho-D-ribosyl)imidazole-4-carboxylate + L-aspartate + ATP = (2S)-2-[5-amino-1-(5-phospho-beta-D-ribosyl)imidazole-4-carboxamido]succinate + ADP + phosphate + 2 H(+). Its pathway is purine metabolism; IMP biosynthesis via de novo pathway; 5-amino-1-(5-phospho-D-ribosyl)imidazole-4-carboxamide from 5-amino-1-(5-phospho-D-ribosyl)imidazole-4-carboxylate: step 1/2. This is Phosphoribosylaminoimidazole-succinocarboxamide synthase from Methanoregula boonei (strain DSM 21154 / JCM 14090 / 6A8).